A 943-amino-acid chain; its full sequence is Aconitate hydratase A (943 aa).

Positions 479, 545, and 548 each coordinate [4Fe-4S] cluster.

It belongs to the aconitase/IPM isomerase family. In terms of assembly, monomer. The cofactor is [4Fe-4S] cluster.

The enzyme catalyses citrate = D-threo-isocitrate. It carries out the reaction (2S,3R)-3-hydroxybutane-1,2,3-tricarboxylate = 2-methyl-cis-aconitate + H2O. It participates in carbohydrate metabolism; tricarboxylic acid cycle; isocitrate from oxaloacetate: step 2/2. The protein operates within organic acid metabolism; propanoate degradation. In terms of biological role, involved in the catabolism of short chain fatty acids (SCFA) via the tricarboxylic acid (TCA)(acetyl degradation route) and probably via the 2-methylcitrate cycle I (propionate degradation route). Catalyzes the reversible isomerization of citrate to isocitrate via cis-aconitate. The apo form of AcnA functions as a RNA-binding regulatory protein which binds to selected IRE-like sequences present within the UTRs (untranslated regions) of 3' trxC and 5' IdeR mRNA. Could catalyze the hydration of 2-methyl-cis-aconitate to yield (2R,3S)-2-methylisocitrate. This chain is Aconitate hydratase A (acn), found in Mycobacterium tuberculosis (strain ATCC 25618 / H37Rv).